We begin with the raw amino-acid sequence, 66 residues long: Large ribosomal subunit protein bL31 (66 aa).

Residues Cys-16, Cys-18, Cys-36, and Cys-39 each coordinate Zn(2+).

It belongs to the bacterial ribosomal protein bL31 family. Type A subfamily. As to quaternary structure, part of the 50S ribosomal subunit. Requires Zn(2+) as cofactor.

In terms of biological role, binds the 23S rRNA. In Geobacillus thermodenitrificans (strain NG80-2), this protein is Large ribosomal subunit protein bL31.